Consider the following 750-residue polypeptide: K(+)-insensitive pyrophosphate-energized proton pump (750 aa).

Helical transmembrane passes span 1–21, 51–71, 78–98, 133–153, and 161–181; these read MYGL…YQGI, FIII…GGLN, VVFI…VAWF, IGML…LFIP, and FIGF…AGGI. K184 contributes to the substrate binding site. Mg(2+)-binding residues include D187, D191, and D216. 6 helical membrane passes run 227–247, 257–277, 301–321, 327–347, 391–411, and 420–440; these read DGFE…LLAI, LVWI…SYWV, LVWL…YMLI, GTMW…GALI, WMGL…TLGL, and VFAF…TIAV. D448 is a Mg(2+) binding site. 4 consecutive transmembrane segments (helical) span residues 503 to 523, 538 to 558, 607 to 627, and 629 to 649; these read VLIG…IMIL, ILWP…YWFT, GMIN…CLES, and LFIG…IFMA. Positions 656, 681, and 685 each coordinate Ca(2+). K688 is a substrate binding site. 2 helical membrane passes run 694-714 and 716-736; these read ALNP…ELAI and LPTT…LVFV.

The protein belongs to the H(+)-translocating pyrophosphatase (TC 3.A.10) family. K(+)-insensitive subfamily. Homodimer. Mg(2+) serves as cofactor.

It is found in the cell inner membrane. It carries out the reaction diphosphate + H2O + H(+)(in) = 2 phosphate + 2 H(+)(out). Proton pump that utilizes the energy of pyrophosphate hydrolysis as the driving force for proton movement across the membrane. Generates a proton motive force. This chain is K(+)-insensitive pyrophosphate-energized proton pump, found in Chlorobaculum tepidum (strain ATCC 49652 / DSM 12025 / NBRC 103806 / TLS) (Chlorobium tepidum).